The sequence spans 177 residues: Early nodulin-like protein 6 (177 aa).

Residues 1-23 (MGGQKIVLLSIFVCFYVFSLVSC) form the signal peptide. Positions 24–127 (TEFEAGGENG…GQKMIIKVME (104 aa)) constitute a Phytocyanin domain. N-linked (GlcNAc...) asparagine glycosylation is present at asparagine 41. Cysteine 81 and cysteine 115 are joined by a disulfide. A lipid anchor (GPI-anchor amidated asparagine) is attached at asparagine 149. A propeptide spans 150 to 177 (HAVRKTSRFLGAGLVTISILVITVFSLV) (removed in mature form).

The protein belongs to the early nodulin-like (ENODL) family. In terms of tissue distribution, confined to flowers.

The protein localises to the cell membrane. Its function is as follows. May act as a carbohydrate transporter. The polypeptide is Early nodulin-like protein 6 (Arabidopsis thaliana (Mouse-ear cress)).